Consider the following 160-residue polypeptide: Small ribosomal subunit protein uS7 (160 aa).

Belongs to the universal ribosomal protein uS7 family. As to quaternary structure, part of the 30S ribosomal subunit. Contacts proteins S9 and S11.

One of the primary rRNA binding proteins, it binds directly to 16S rRNA where it nucleates assembly of the head domain of the 30S subunit. Is located at the subunit interface close to the decoding center, probably blocks exit of the E-site tRNA. The chain is Small ribosomal subunit protein uS7 from Anaplasma phagocytophilum (strain HZ).